We begin with the raw amino-acid sequence, 87 residues long: Beta-toxin Ct17 (87 aa).

The first 19 residues, 1–19 (MNSLLMITACLVLIGTVWA), serve as a signal peptide directing secretion. An LCN-type CS-alpha/beta domain is found at 20–85 (KKDGYLVDKT…TWPLPNKRCG (66 aa)). 4 disulfide bridges follow: Cys-31/Cys-84, Cys-35/Cys-60, Cys-44/Cys-65, and Cys-48/Cys-67. Cysteine amide is present on Cys-84.

Belongs to the long (4 C-C) scorpion toxin superfamily. Sodium channel inhibitor family. Beta subfamily. Expressed by the venom gland.

It localises to the secreted. In terms of biological role, beta toxins bind voltage-independently at site-4 of sodium channels (Nav) and shift the voltage of activation toward more negative potentials thereby affecting sodium channel activation and promoting spontaneous and repetitive firing. Is possibly lethal to mice, freshwater shrimp and crickets. This is Beta-toxin Ct17 from Centruroides tecomanus (Scorpion).